Consider the following 325-residue polypeptide: Histone-lysine N-methyltransferase ATXR4 (325 aa).

The N-terminal stretch at Met-1 to Ala-30 is a signal peptide. The SET domain occupies Pro-42 to Ile-295.

The protein belongs to the class V-like SAM-binding methyltransferase superfamily. Histone-lysine methyltransferase family. TRX/MLL subfamily.

It localises to the nucleus. It catalyses the reaction L-lysyl-[histone] + S-adenosyl-L-methionine = N(6)-methyl-L-lysyl-[histone] + S-adenosyl-L-homocysteine + H(+). In terms of biological role, histone methyltransferase. The protein is Histone-lysine N-methyltransferase ATXR4 (ATXR4) of Arabidopsis thaliana (Mouse-ear cress).